The sequence spans 297 residues: 4-hydroxybenzoate octaprenyltransferase (297 aa).

Helical transmembrane passes span 29-49 (IGTYLLLWPTLWALWIAAEGV), 55-75 (LFIFITGVILMRAAGCVVNDF), 102-122 (AWTLFAVLVGLSFGLVLLTNA), 124-141 (TVYLSFGALALAACYPFM), 146-166 (FYPQVVLGAAFSWGMPMAFTA), 169-189 (GSLPPEAWLLFIANLLWTVAY), 219-239 (VIIVTLQGLALFCLLLAGVRF), 241-261 (LGQWFHLGLVIAAGCFAWEFW), and 270-290 (VCFKAFLHNHWAGLAILAGIV).

This sequence belongs to the UbiA prenyltransferase family. Mg(2+) is required as a cofactor.

The protein localises to the cell inner membrane. It carries out the reaction all-trans-octaprenyl diphosphate + 4-hydroxybenzoate = 4-hydroxy-3-(all-trans-octaprenyl)benzoate + diphosphate. The protein operates within cofactor biosynthesis; ubiquinone biosynthesis. Catalyzes the prenylation of para-hydroxybenzoate (PHB) with an all-trans polyprenyl group. Mediates the second step in the final reaction sequence of ubiquinone-8 (UQ-8) biosynthesis, which is the condensation of the polyisoprenoid side chain with PHB, generating the first membrane-bound Q intermediate 3-octaprenyl-4-hydroxybenzoate. This Stutzerimonas stutzeri (strain A1501) (Pseudomonas stutzeri) protein is 4-hydroxybenzoate octaprenyltransferase.